Reading from the N-terminus, the 381-residue chain is MIISSASDYREAARRRVPPFMFHYADGGSYAEQTLARNVSDLENIALRQRVLKDMSELDTSIELFGEKLSMPTILAPVGACGMYARRGEVQAAQAADNKGVPFTLSTVSICPIEEVAPAIKRPMWFQLYVLKDRGFMKNALERAKAAGCSTLVFTVDMPTPGARYRDMHSGMSGPYKEIRRVLQGFTHPFWAYDVGIKGKPHTLGNVSTYMGRQIGLDDYIGWLTENFDPSISWKDLEWIREFWEGPMVIKGILDPEDAKDAVRFGADGIVVSNHGGRQLDGVLSSARALPPIADAVKGDIKIIADSGIRNGLDIVRMLALGADATMLGRAFVYALGAAGRQGVENMLDIFKKEMRVAMTLTSNRTIADIKPEALVDLSKL.

Positions 1–380 (MIISSASDYR…KPEALVDLSK (380 aa)) constitute an FMN hydroxy acid dehydrogenase domain. Tyr-24 contributes to the substrate binding site. FMN contacts are provided by Ser-106 and Gln-127. A substrate-binding site is contributed by Tyr-129. Residue Thr-155 participates in FMN binding. Position 164 (Arg-164) interacts with substrate. Lys-251 lines the FMN pocket. Residue His-275 is the Proton acceptor of the active site. Arg-278 is a substrate binding site. 306-330 (DSGIRNGLDIVRMLALGADATMLGR) serves as a coordination point for FMN.

This sequence belongs to the FMN-dependent alpha-hydroxy acid dehydrogenase family. FMN serves as cofactor.

Its subcellular location is the cell inner membrane. The enzyme catalyses (S)-lactate + A = pyruvate + AH2. Catalyzes the conversion of L-lactate to pyruvate. Is coupled to the respiratory chain. The protein is L-lactate dehydrogenase of Haemophilus influenzae (strain PittEE).